A 472-amino-acid polypeptide reads, in one-letter code: Succinate-semialdehyde dehydrogenase [NADP(+)] (472 aa).

Residues 134-135 (WN), 158-161 (KHAS), and 210-211 (GS) each bind NADP(+). Catalysis depends on glutamate 232, which acts as the Proton acceptor. Position 233 (leucine 233) interacts with NADP(+). Cysteine 266 serves as the catalytic Nucleophile. Glutamate 363 is an NADP(+) binding site.

Belongs to the aldehyde dehydrogenase family.

It catalyses the reaction succinate semialdehyde + NADP(+) + H2O = succinate + NADPH + 2 H(+). Catalyzes the NADP(+)-dependent oxidation of succinate semialdehyde to succinate. It is believed to be the main source of succinate semialdehyde dehydrogenase activity in Mycobacterium. The polypeptide is Succinate-semialdehyde dehydrogenase [NADP(+)] (gabD1) (Mycolicibacterium paratuberculosis (strain ATCC BAA-968 / K-10) (Mycobacterium paratuberculosis)).